A 228-amino-acid polypeptide reads, in one-letter code: uncharacterized protein (228 aa).

A run of 6 helical transmembrane segments spans residues 14–34, 53–73, 108–128, 148–168, 178–198, and 200–220; these read GWYI…MWLI, FLII…VLIV, GLTF…FFWL, AVKM…PIFF, TIIS…GFSI, and SVVY…YMAI.

It localises to the cell membrane. This is an uncharacterized protein from Bacillus subtilis (strain 168).